The primary structure comprises 273 residues: 2,3,4,5-tetrahydropyridine-2,6-dicarboxylate N-succinyltransferase (273 aa).

2 residues coordinate substrate: R104 and D141.

This sequence belongs to the transferase hexapeptide repeat family. As to quaternary structure, homotrimer.

Its subcellular location is the cytoplasm. It carries out the reaction (S)-2,3,4,5-tetrahydrodipicolinate + succinyl-CoA + H2O = (S)-2-succinylamino-6-oxoheptanedioate + CoA. The protein operates within amino-acid biosynthesis; L-lysine biosynthesis via DAP pathway; LL-2,6-diaminopimelate from (S)-tetrahydrodipicolinate (succinylase route): step 1/3. The polypeptide is 2,3,4,5-tetrahydropyridine-2,6-dicarboxylate N-succinyltransferase (Nitrosococcus oceani (strain ATCC 19707 / BCRC 17464 / JCM 30415 / NCIMB 11848 / C-107)).